The chain runs to 669 residues: Phosphatidylinositol-3-phosphate phosphatase MTMR1 (669 aa).

Met-1 bears the N-acetylmethionine mark. A compositionally biased stretch (low complexity) spans 1-17; sequence MDRPVAAAAAASAASCE. The interval 1–55 is disordered; it reads MDRPVAAAAAASAASCEGAGGPGPGPGASWRPSRVAGGASASSRHPSIETLDSPT. A phosphoserine mark is found at Ser-47 and Ser-53. The 72-residue stretch at 94 to 165 folds into the GRAM domain; it reads NKLAQMEEAP…GVISRVEKIG (72 aa). In terms of domain architecture, Myotubularin phosphatase spans 230 to 605; the sequence is GWKVYDPVSE…SHLELWVNYY (376 aa). Positions 355, 380, and 381 each coordinate a 1,2-diacyl-sn-glycero-3-phospho-(1D-myo-inositol-3-phosphate). The active-site Phosphocysteine intermediate is the Cys-442. Positions 443, 444, 445, 446, 447, 448, and 488 each coordinate a 1,2-diacyl-sn-glycero-3-phospho-(1D-myo-inositol-3-phosphate). Position 443 (Ser-443) interacts with phosphate. Residues Gly-445, Trp-446, Asp-447, and Arg-448 each contribute to the phosphate site. Residues 612 to 669 are required for dimerization; sequence MRPQMPIHQNLKELLAIKAELQKRVEDLQREMATRTISSSSERGSSPTHSATPVHTSV. The tract at residues 644–669 is disordered; that stretch reads ATRTISSSSERGSSPTHSATPVHTSV. Residues 649-661 are compositionally biased toward low complexity; the sequence is SSSSERGSSPTHS.

This sequence belongs to the protein-tyrosine phosphatase family. Non-receptor class myotubularin subfamily. As to quaternary structure, homodimer. Widely expressed. Detected in skeletal muscle, heart, lung, liver and brain.

Its subcellular location is the cell membrane. The protein localises to the cytoplasm. It catalyses the reaction a 1,2-diacyl-sn-glycero-3-phospho-(1D-myo-inositol-3-phosphate) + H2O = a 1,2-diacyl-sn-glycero-3-phospho-(1D-myo-inositol) + phosphate. It carries out the reaction 1,2-dioctanoyl-sn-glycero-3-phospho-(1-D-myo-inositol-3-phosphate) + H2O = 1,2-dioctanoyl-sn-glycero-3-phospho-(1D-myo-inositol) + phosphate. The catalysed reaction is a 1,2-diacyl-sn-glycero-3-phospho-(1D-myo-inositol-3,5-bisphosphate) + H2O = a 1,2-diacyl-sn-glycero-3-phospho-(1D-myo-inositol-5-phosphate) + phosphate. Functionally, lipid phosphatase that specifically dephosphorylates the D-3 position of phosphatidylinositol 3-phosphate, generating phosphatidylinositol. Could also dephosphorylate phosphatidylinositol 3,5-bisphosphate to produce phosphatidylinositol 5-phosphate. This Mus musculus (Mouse) protein is Phosphatidylinositol-3-phosphate phosphatase MTMR1.